The sequence spans 1072 residues: Carbamoyl phosphate synthase large chain (1072 aa).

The interval 1–401 (MPKRLDINTI…SLLKAVRSLE (401 aa)) is carboxyphosphate synthetic domain. Residues Arg-129, Arg-169, Gly-175, Gly-176, Lys-208, Ile-210, Glu-215, Gly-241, Val-242, His-243, Gln-284, and Glu-298 each coordinate ATP. One can recognise an ATP-grasp 1 domain in the interval 133–327 (RTLMQELNEP…IAKLAAKIAV (195 aa)). The Mg(2+) site is built by Gln-284, Glu-298, and Asn-300. Residues Gln-284, Glu-298, and Asn-300 each coordinate Mn(2+). The interval 402 to 546 (LGIYHLELDH…YSTYADENES (145 aa)) is oligomerization domain. Positions 547 to 929 (IVTDRKSVVV…ALYKGLVASG (383 aa)) are carbamoyl phosphate synthetic domain. The 191-residue stretch at 671–861 (EAALTKLGIP…MANVATKVIL (191 aa)) folds into the ATP-grasp 2 domain. ATP-binding residues include Arg-707, Arg-746, Glu-752, Gly-777, Val-778, His-779, Ser-780, Gln-820, and Glu-832. Residues Gln-820, Glu-832, and Asn-834 each coordinate Mg(2+). 3 residues coordinate Mn(2+): Gln-820, Glu-832, and Asn-834. Residues 930-1072 (INIPTHGSVI…QTKRHEVVHA (143 aa)) form the MGS-like domain. Residues 930-1072 (INIPTHGSVI…QTKRHEVVHA (143 aa)) are allosteric domain.

The protein belongs to the CarB family. In terms of assembly, composed of two chains; the small (or glutamine) chain promotes the hydrolysis of glutamine to ammonia, which is used by the large (or ammonia) chain to synthesize carbamoyl phosphate. Tetramer of heterodimers (alpha,beta)4. Mg(2+) serves as cofactor. The cofactor is Mn(2+).

The enzyme catalyses hydrogencarbonate + L-glutamine + 2 ATP + H2O = carbamoyl phosphate + L-glutamate + 2 ADP + phosphate + 2 H(+). It catalyses the reaction hydrogencarbonate + NH4(+) + 2 ATP = carbamoyl phosphate + 2 ADP + phosphate + 2 H(+). Its pathway is amino-acid biosynthesis; L-arginine biosynthesis; carbamoyl phosphate from bicarbonate: step 1/1. It functions in the pathway pyrimidine metabolism; UMP biosynthesis via de novo pathway; (S)-dihydroorotate from bicarbonate: step 1/3. In terms of biological role, large subunit of the glutamine-dependent carbamoyl phosphate synthetase (CPSase). CPSase catalyzes the formation of carbamoyl phosphate from the ammonia moiety of glutamine, carbonate, and phosphate donated by ATP, constituting the first step of 2 biosynthetic pathways, one leading to arginine and/or urea and the other to pyrimidine nucleotides. The large subunit (synthetase) binds the substrates ammonia (free or transferred from glutamine from the small subunit), hydrogencarbonate and ATP and carries out an ATP-coupled ligase reaction, activating hydrogencarbonate by forming carboxy phosphate which reacts with ammonia to form carbamoyl phosphate. The protein is Carbamoyl phosphate synthase large chain of Bacillus thuringiensis (strain Al Hakam).